A 308-amino-acid chain; its full sequence is Methionyl-tRNA formyltransferase (308 aa).

111 to 114 provides a ligand contact to (6S)-5,6,7,8-tetrahydrofolate; sequence SLLP.

Belongs to the Fmt family.

It carries out the reaction L-methionyl-tRNA(fMet) + (6R)-10-formyltetrahydrofolate = N-formyl-L-methionyl-tRNA(fMet) + (6S)-5,6,7,8-tetrahydrofolate + H(+). Its function is as follows. Attaches a formyl group to the free amino group of methionyl-tRNA(fMet). The formyl group appears to play a dual role in the initiator identity of N-formylmethionyl-tRNA by promoting its recognition by IF2 and preventing the misappropriation of this tRNA by the elongation apparatus. The chain is Methionyl-tRNA formyltransferase from Thermodesulfovibrio yellowstonii (strain ATCC 51303 / DSM 11347 / YP87).